The following is a 423-amino-acid chain: Divalent metal cation transporter MntH (423 aa).

11 helical membrane-spanning segments follow: residues 31 to 51 (LMML…GNFA), 58 to 78 (SSFG…AMLI), 116 to 136 (IIAI…FQLV), 137 to 157 (FGIS…MILI), 168 to 188 (VVIG…LFFA), 213 to 233 (AAGI…SALF), 254 to 274 (IAMV…AAVF), 302 to 322 (VLFG…GTMA), 342 to 362 (FITM…TDIL), 363 to 383 (VMSQ…LLIF), and 401 to 421 (YAGV…MVTL).

This sequence belongs to the NRAMP family.

It localises to the cell inner membrane. H(+)-stimulated, divalent metal cation uptake system. The polypeptide is Divalent metal cation transporter MntH (Vibrio campbellii (strain ATCC BAA-1116)).